The primary structure comprises 401 residues: MSTASAFSSIQGCWFKGERKIRVADKRAKRLTLGSHVASPSSMSFRVSASSSVKPEKDIRIGLLGASGYTGAEIVRLLANHPHFQVTLMTADRKAGQSMESVFPHLRAQKLPTLVSVKDADFSTVDAVFCCLPHGTTQEIIKELPTALKIVDLSADFRLRNIAEYEEWYGQPHKAVELQKEVVYGLTEILREDIKKARLVANPGCYPTTIQLPLVPLLKANLIKHENIIIDAKSGVSGAGRGAKEANLYSEIAEGISSYGVTRHRHVPEIEQGLSDVAQSKVTVSFTPHLMPMIRGMQSTIYVEMAPGVRTEDLHQQLKTSYEDEEFVKVLDEGVVPRTHNVRGSNYCHMSVFPDRIPGRAIIISVIDNLVKGASGQALQNLNIMLGYPETTGLLHQPLFP.

Residues 1 to 48 constitute a chloroplast transit peptide; that stretch reads MSTASAFSSIQGCWFKGERKIRVADKRAKRLTLGSHVASPSSMSFRVS. C205 is a catalytic residue.

Belongs to the NAGSA dehydrogenase family. Type 1 subfamily. Homotetramer.

Its subcellular location is the plastid. It is found in the chloroplast. It catalyses the reaction N-acetyl-L-glutamate 5-semialdehyde + phosphate + NADP(+) = N-acetyl-L-glutamyl 5-phosphate + NADPH + H(+). It functions in the pathway amino-acid biosynthesis; L-arginine biosynthesis; N(2)-acetyl-L-ornithine from L-glutamate: step 3/4. The protein is Probable N-acetyl-gamma-glutamyl-phosphate reductase, chloroplastic of Arabidopsis thaliana (Mouse-ear cress).